Here is a 239-residue protein sequence, read N- to C-terminus: Prolyl hydroxylase EGLN3 (239 aa).

The beta(2)beta(3) 'finger-like' loop stretch occupies residues 62-73; it reads AGPRAGVSKRHL. Residues 88–104 form a required for interaction with ADRB2 region; sequence CEAISFLLSLIDRLVLY. In terms of domain architecture, Fe2OG dioxygenase spans 116–214; it reads ERSKAMVACY…RYAMTVWYFD (99 aa). H135, D137, and H196 together coordinate Fe cation. R205 is a 2-oxoglutarate binding site.

Interacts with BCL2 (via its BH4 domain); the interaction disrupts the BAX-BCL4 complex inhibiting the anti-apoptotic activity of BCL2. Interacts with WDR83; the interaction leads to almost complete elimination of HIF-mediated reporter activity. Interacts with ADRB2; the interaction hydroxylates ADRB2 facilitating its ubiquitination by the VHL-E3 ligase complex. Interacts with PAX2; the interaction targets PAX2 for destruction. Interacts with PKM; the interaction hydroxylates PKM in hypoxia. Interacts with LIMD1, WTIP and AJUBA. Requires Fe(2+) as cofactor. The cofactor is L-ascorbate. In terms of processing, ubiquitinated by SIAH1 and/or SIAH2 in response to the unfolded protein response (UPR), leading to its degradation. In terms of tissue distribution, widely expressed at low levels. Expressed at higher levels in adult heart (cardiac myocytes, aortic endothelial cells and coronary artery smooth muscle), lung and placenta, and in fetal spleen, heart and skeletal muscle. Also expressed in pancreas. Localized to pancreatic acini and islet cells.

It is found in the nucleus. Its subcellular location is the cytoplasm. It catalyses the reaction L-prolyl-[protein] + 2-oxoglutarate + O2 = trans-4-hydroxy-L-prolyl-[protein] + succinate + CO2. The catalysed reaction is L-prolyl-[hypoxia-inducible factor alpha subunit] + 2-oxoglutarate + O2 = trans-4-hydroxy-L-prolyl-[hypoxia-inducible factor alpha subunit] + succinate + CO2. Activated in cardiovascular cells and Hela cells following exposure to hypoxia. Inhibited by polynitrogen compounds probably by chelation to Fe(2+) ions. In terms of biological role, prolyl hydroxylase that mediates hydroxylation of proline residues in target proteins, such as PKM, TELO2, ATF4 and HIF1A. Target proteins are preferentially recognized via a LXXLAP motif. Cellular oxygen sensor that catalyzes, under normoxic conditions, the post-translational formation of 4-hydroxyproline in hypoxia-inducible factor (HIF) alpha proteins. Hydroxylates a specific proline found in each of the oxygen-dependent degradation (ODD) domains (N-terminal, NODD, and C-terminal, CODD) of HIF1A. Also hydroxylates HIF2A. Has a preference for the CODD site for both HIF1A and HIF2A. Hydroxylation on the NODD site by EGLN3 appears to require prior hydroxylation on the CODD site. Hydroxylated HIFs are then targeted for proteasomal degradation via the von Hippel-Lindau ubiquitination complex. Under hypoxic conditions, the hydroxylation reaction is attenuated allowing HIFs to escape degradation resulting in their translocation to the nucleus, heterodimerization with HIF1B, and increased expression of hypoxy-inducible genes. ELGN3 is the most important isozyme in limiting physiological activation of HIFs (particularly HIF2A) in hypoxia. Also hydroxylates PKM in hypoxia, limiting glycolysis. Under normoxia, hydroxylates and regulates the stability of ADRB2. Regulator of cardiomyocyte and neuronal apoptosis. In cardiomyocytes, inhibits the anti-apoptotic effect of BCL2 by disrupting the BAX-BCL2 complex. In neurons, has a NGF-induced proapoptotic effect, probably through regulating CASP3 activity. Also essential for hypoxic regulation of neutrophilic inflammation. Plays a crucial role in DNA damage response (DDR) by hydroxylating TELO2, promoting its interaction with ATR which is required for activation of the ATR/CHK1/p53 pathway. Also mediates hydroxylation of ATF4, leading to decreased protein stability of ATF4. In Homo sapiens (Human), this protein is Prolyl hydroxylase EGLN3.